The following is a 643-amino-acid chain: Nicastrin (643 aa).

The signal sequence occupies residues 1–20; it reads MRFKNVLVLLLLLVFSVINS. Residues 21–611 lie on the Extracellular side of the membrane; it reads EPSAPATISD…VFKIGNSTTE (591 aa). An intrachain disulfide couples Cys-42 to Cys-54. Residues Asn-96 and Asn-166 are each glycosylated (N-linked (GlcNAc...) asparagine). 2 disulfides stabilise this stretch: Cys-204–Cys-210 and Cys-308–Cys-318. N-linked (GlcNAc...) asparagine glycosylation is found at Asn-333 and Asn-385. 3 disulfides stabilise this stretch: Cys-479–Cys-486, Cys-540–Cys-551, and Cys-546–Cys-556. Asn-584 is a glycosylation site (N-linked (GlcNAc...) asparagine). The helical transmembrane segment at 612 to 632 threads the bilayer; it reads IWFLVSGLIELLVSIGLILYV. Residues 633–643 lie on the Cytoplasmic side of the membrane; that stretch reads KKFLSNRYKLL.

This sequence belongs to the nicastrin family. Component of the gamma-secretase complex, a complex composed of a presenilin homodimer, nicastrin, aph1 and pen2.

It localises to the membrane. Its function is as follows. Essential subunit of the gamma-secretase complex, an endoprotease complex that catalyzes the intramembrane cleavage of integral membrane proteins such as Notch receptors and APP (amyloid-beta precursor protein). The chain is Nicastrin from Dictyostelium purpureum (Slime mold).